Reading from the N-terminus, the 612-residue chain is Actin-binding LIM protein 2 (612 aa).

LIM zinc-binding domains follow at residues 22 to 81 (ILCN…LYGT), 81 to 141 (TRCF…TLLG), 151 to 210 (RSCG…KFGI), and 210 to 270 (IRCD…ARTE). Positions 83, 86, 103, 106, 109, 112, 131, and 134 each coordinate Zn(2+). 8 residues coordinate Zn(2+): cysteine 212, cysteine 215, histidine 232, cysteine 235, cysteine 238, cysteine 241, histidine 260, and cysteine 263. Over residues 269–278 (TEDKSKETRT) the composition is skewed to basic and acidic residues. Disordered regions lie at residues 269–295 (TEDKSKETRTSSESIVSVPASSTSGSP) and 341–433 (AVGD…DNIY). A compositionally biased stretch (low complexity) spans 279–295 (SSESIVSVPASSTSGSP). Phosphoserine occurs at positions 282, 294, 351, 356, 365, and 368. Low complexity predominate over residues 364–373 (SSPSSAGSVS). Residues 394–416 (SGRSTPSLSVHSDSRPPSSTYQQ) show a composition bias toward polar residues. A Phosphoserine modification is found at serine 453. A disordered region spans residues 471 to 498 (ADTRTNSPDLDSQSLSLSSGTDQEPLQR). The residue at position 473 (threonine 473) is a Phosphothreonine. Serine 477 and serine 579 each carry phosphoserine. Over residues 477-489 (SPDLDSQSLSLSS) the composition is skewed to low complexity. One can recognise an HP domain in the interval 544–612 (TREYKIYPYD…NDLKKKALLF (69 aa)).

As to quaternary structure, interacts with F-actin and ABRA. In terms of tissue distribution, expressed in brain. Highly expressed in caudate/putamen, moderately expressed in the olfactory bulb. In the hippocampus, expressed in the CA1, CA2 and CA3 fields. In the cerebellum, expressed in Purkinje cells.

It is found in the cytoplasm. Functionally, may act as scaffold protein. May stimulate ABRA activity and ABRA-dependent SRF transcriptional activity. This chain is Actin-binding LIM protein 2 (Ablim2), found in Mus musculus (Mouse).